The chain runs to 1036 residues: Isoleucine--tRNA ligase (1036 aa).

The 'HIGH' region motif lies at 48 to 58; sequence PTANGKPHVGH. A 'KMSKS' region motif is present at residues 590-594; that stretch reads KMSKS. Lysine 593 serves as a coordination point for ATP.

The protein belongs to the class-I aminoacyl-tRNA synthetase family. IleS type 2 subfamily. Monomer. The cofactor is Zn(2+).

The protein localises to the cytoplasm. It catalyses the reaction tRNA(Ile) + L-isoleucine + ATP = L-isoleucyl-tRNA(Ile) + AMP + diphosphate. Catalyzes the attachment of isoleucine to tRNA(Ile). As IleRS can inadvertently accommodate and process structurally similar amino acids such as valine, to avoid such errors it has two additional distinct tRNA(Ile)-dependent editing activities. One activity is designated as 'pretransfer' editing and involves the hydrolysis of activated Val-AMP. The other activity is designated 'posttransfer' editing and involves deacylation of mischarged Val-tRNA(Ile). The polypeptide is Isoleucine--tRNA ligase (Clostridium tetani (strain Massachusetts / E88)).